The following is a 366-amino-acid chain: Photosynthetic reaction center cytochrome c subunit (366 aa).

Residues 1–22 (MALAVRISTLTVAVTAAALLAG) form the signal peptide. Residue C23 is the site of N-palmitoyl cysteine attachment. C23 carries S-diacylglycerol cysteine lipidation. Heme-binding residues include M94, C107, C110, H111, M129, H143, C151, C154, H155, M238, C249, C252, H253, C309, C312, and H313.

Component of the photosynthetic reaction center composed of protein subunits L (PufL), M (PufM), H (PuhA) and cytochrome C (PufC). The reaction center interacts with light-harvesting antenna complex LH1. Post-translationally, binds 4 heme groups per subunit.

It is found in the cellular chromatophore membrane. The reaction center of purple bacteria contains a tightly bound cytochrome molecule which re-reduces the photo oxidized primary electron donor. The chain is Photosynthetic reaction center cytochrome c subunit (pufC) from Rubrivivax gelatinosus (strain NBRC 100245 / IL144).